A 193-amino-acid chain; its full sequence is dCTP deaminase (193 aa).

DCTP-binding positions include 110 to 115, aspartate 128, 136 to 138, tyrosine 171, lysine 178, and glutamine 182; these read RSSLAR and VLE. Glutamate 138 functions as the Proton donor/acceptor in the catalytic mechanism. The disordered stretch occupies residues 169-193; sequence RPYNRREDAKYRNQQGAVASRIDKD.

It belongs to the dCTP deaminase family. As to quaternary structure, homotrimer.

The catalysed reaction is dCTP + H2O + H(+) = dUTP + NH4(+). The protein operates within pyrimidine metabolism; dUMP biosynthesis; dUMP from dCTP (dUTP route): step 1/2. Catalyzes the deamination of dCTP to dUTP. The chain is dCTP deaminase from Sodalis glossinidius (strain morsitans).